Here is a 392-residue protein sequence, read N- to C-terminus: Speckle-type POZ protein-like (392 aa).

The MATH domain maps to 31–161 (KFSYMWTINN…DDKLTLYCEV (131 aa)). The BTB domain occupies 200–267 (TDCSLFVEGK…IYTGGTPHVD (68 aa)).

Belongs to the Tdpoz family. As to quaternary structure, homodimer. Heterodimer with SPOP. Component of cullin-RING-based BCR (BTB-CUL3-RBX1) E3 ubiquitin-protein ligase complexes containing homodimeric SPOPL or the heterodimer formed by SPOP and SPOPL.

It is found in the nucleus. It participates in protein modification; protein ubiquitination. Component of a cullin-RING-based BCR (BTB-CUL3-RBX1) E3 ubiquitin-protein ligase complex that mediates the ubiquitination and subsequent proteasomal degradation of target proteins, but with relatively low efficiency. This is Speckle-type POZ protein-like (spopl) from Xenopus laevis (African clawed frog).